We begin with the raw amino-acid sequence, 132 residues long: uncharacterized protein (132 aa).

2 helical membrane passes run 44 to 64 and 75 to 95; these read FMSF…FTFI and IAMI…AMLF.

The protein localises to the cytoplasm. The protein resides in the membrane. This is an uncharacterized protein from Schizosaccharomyces pombe (strain 972 / ATCC 24843) (Fission yeast).